The primary structure comprises 423 residues: Exodeoxyribonuclease 7 large subunit (423 aa).

It belongs to the XseA family. As to quaternary structure, heterooligomer composed of large and small subunits.

Its subcellular location is the cytoplasm. The enzyme catalyses Exonucleolytic cleavage in either 5'- to 3'- or 3'- to 5'-direction to yield nucleoside 5'-phosphates.. Its function is as follows. Bidirectionally degrades single-stranded DNA into large acid-insoluble oligonucleotides, which are then degraded further into small acid-soluble oligonucleotides. The chain is Exodeoxyribonuclease 7 large subunit from Natranaerobius thermophilus (strain ATCC BAA-1301 / DSM 18059 / JW/NM-WN-LF).